The primary structure comprises 296 residues: Putative fatty acid elongase DDB_G0272012 (296 aa).

Helical transmembrane passes span phenylalanine 51–leucine 71, valine 83–leucine 103, tryptophan 134–leucine 154, leucine 159–tyrosine 179, leucine 184–phenylalanine 204, methionine 220–isoleucine 240, and alanine 253–valine 273. Over residues serine 277–threonine 290 the composition is skewed to low complexity. Residues serine 277 to aspartate 296 form a disordered region.

Belongs to the ELO family.

It is found in the membrane. The catalysed reaction is a very-long-chain acyl-CoA + malonyl-CoA + H(+) = a very-long-chain 3-oxoacyl-CoA + CO2 + CoA. Its function is as follows. Could be implicated in synthesis of very long chain fatty acids. In Dictyostelium discoideum (Social amoeba), this protein is Putative fatty acid elongase DDB_G0272012.